The following is a 67-amino-acid chain: Probable Sec-independent protein translocase protein TatE (67 aa).

A helical membrane pass occupies residues 4–21 (ISITKLLVIAALVVLLFG).

Belongs to the TatA/E family. TatE subfamily.

The protein localises to the cell inner membrane. In terms of biological role, part of the twin-arginine translocation (Tat) system that transports large folded proteins containing a characteristic twin-arginine motif in their signal peptide across membranes. TatE shares overlapping functions with TatA. This chain is Probable Sec-independent protein translocase protein TatE, found in Citrobacter rodentium (strain ICC168) (Citrobacter freundii biotype 4280).